The sequence spans 277 residues: Putative serine/threonine-protein kinase PRKY (277 aa).

Low complexity predominate over residues 1–12 (MEAPGPAQAAAA). The disordered stretch occupies residues 1–40 (MEAPGPAQAAAAESNSREVTEDAADWAPALCPSPEARSPE). Residues 49 to 277 (CDALVTMGTG…DFHVKTGRMM (229 aa)) enclose the Protein kinase domain. ATP is bound by residues 55-63 (MGTGTFGRV) and lysine 78. The active-site Proton acceptor is aspartate 172. Threonine 203 bears the Phosphothreonine mark.

It belongs to the protein kinase superfamily. AGC Ser/Thr protein kinase family. cAMP subfamily. In terms of tissue distribution, ubiquitous.

The enzyme catalyses L-seryl-[protein] + ATP = O-phospho-L-seryl-[protein] + ADP + H(+). The catalysed reaction is L-threonyl-[protein] + ATP = O-phospho-L-threonyl-[protein] + ADP + H(+). The chain is Putative serine/threonine-protein kinase PRKY (PRKY) from Homo sapiens (Human).